The chain runs to 523 residues: Tryptamine 5-hydroxylase (523 aa).

A helical transmembrane segment spans residues 5 to 25; that stretch reads MASTMSLALLVLSAAYVLVAL. Cys-453 contacts heme.

It belongs to the cytochrome P450 family. Heme is required as a cofactor.

It localises to the endoplasmic reticulum membrane. The enzyme catalyses tryptamine + reduced [NADPH--hemoprotein reductase] + O2 = serotonin + oxidized [NADPH--hemoprotein reductase] + H2O + H(+). Functionally, involved in serotonin biosynthesis. Catalyzes the conversion of tryptamine to serotonin. Accumulation of serotonin may play a role in innate immunity. The protein is Tryptamine 5-hydroxylase of Oryza sativa subsp. japonica (Rice).